The sequence spans 419 residues: Probable pectate lyase C (419 aa).

An N-terminal signal peptide occupies residues 1-19 (MRLTPSLISCLSLLHFTSA). 3 N-linked (GlcNAc...) asparagine glycosylation sites follow: asparagine 48, asparagine 164, and asparagine 201. The active site involves arginine 204. Positions 261–296 (NENFHAYVETNYYDSDKDGTLNGSELGVDSTNYGGM) constitute an EF-hand domain. Ca(2+) contacts are provided by aspartate 274, aspartate 276, aspartate 278, and threonine 280. N-linked (GlcNAc...) asparagine glycosylation occurs at asparagine 282. Residue glutamate 285 participates in Ca(2+) binding. The segment at 352-395 (ISDEADMGGAGDLDQGTTPTDTDGDGIPDDAEAELGTDPNTADS) is disordered. Residues 363–372 (DLDQGTTPTD) show a composition bias toward low complexity. A compositionally biased stretch (acidic residues) spans 373–386 (TDGDGIPDDAEAEL).

The protein belongs to the polysaccharide lyase 1 family. It depends on Ca(2+) as a cofactor.

The protein localises to the secreted. It catalyses the reaction Eliminative cleavage of (1-&gt;4)-alpha-D-galacturonan to give oligosaccharides with 4-deoxy-alpha-D-galact-4-enuronosyl groups at their non-reducing ends.. Its function is as follows. Pectinolytic enzyme consist of four classes of enzymes: pectin lyase, polygalacturonase, pectin methylesterase and rhamnogalacturonase. Among pectinolytic enzymes, pectin lyase is the most important in depolymerization of pectin, since it cleaves internal glycosidic bonds of highly methylated pectins. Favors pectate, the anion, over pectin, the methyl ester. The sequence is that of Probable pectate lyase C (plyC) from Aspergillus oryzae (strain ATCC 42149 / RIB 40) (Yellow koji mold).